Here is a 374-residue protein sequence, read N- to C-terminus: MAEKTFINRLQLTDFRNYGSASLRLDGRHVVLTGNNGSGKTNLMEAVSFLSPGRGLRRAVLSDVARAGAASGFSIFASLEGMAGDVELGTGSEVLDETAVRRLRINGASVRSVDELTDHLRVLWLTPAMDGLFTGSSSERRRFLDRLVLSIDPQHGRRASDFERAMRSRNKLLSEGRFDASWLAGIEQQMAALGIAMALARQEMMRLLAALIEQRREPETFPGADLMLSGFMDEHAGTAAIDLEDTYRDSLAGSRGRDAAAGRTLEGPHRSDLLVRHREKDMEAERCSTGEQKALLIGLILAHAELVATMTGFAPILLLDEIAAHLDEGRRAALFDRIDVLGGQAFMTGTDAQMFASLGDRAQFVTVDDGHLSL.

34 to 41 contributes to the ATP binding site; sequence GNNGSGKT.

Belongs to the RecF family.

It is found in the cytoplasm. Its function is as follows. The RecF protein is involved in DNA metabolism; it is required for DNA replication and normal SOS inducibility. RecF binds preferentially to single-stranded, linear DNA. It also seems to bind ATP. The sequence is that of DNA replication and repair protein RecF from Allorhizobium ampelinum (strain ATCC BAA-846 / DSM 112012 / S4) (Agrobacterium vitis (strain S4)).